Here is a 160-residue protein sequence, read N- to C-terminus: Eosinophil cationic protein (160 aa).

The N-terminal stretch at 1 to 27 (MVPKLFTSQICLLLLLGLSGVGGSLHA) is a signal peptide. Positions 28-72 (KPRQFTRAQWFAIQHVSLNPPQCTTAMRVINNYQRRCKDQNTFLR) are required for nearly all of the bactericidal activities; partially involved in LPS-binding. The active-site Proton acceptor is His-42. 4 disulfides stabilise this stretch: Cys-50–Cys-110, Cys-64–Cys-123, Cys-82–Cys-138, and Cys-89–Cys-98. Position 60 is a 3'-nitrotyrosine (Tyr-60). Position 65 to 69 (65 to 69 (KDQNT)) interacts with substrate. Asn-86, Asn-92, Asn-111, and Asn-119 each carry an N-linked (GlcNAc...) asparagine glycan. The Proton donor role is filled by His-155.

Belongs to the pancreatic ribonuclease family. As to quaternary structure, interacts with bacterial lipopolysaccharide (LPS) and lipoteichoic acid (LTA). In vitro interacts with phospholipid bilayers.

The protein localises to the secreted. Functionally, cytotoxin and helminthotoxin with low-efficiency ribonuclease activity. Possesses a wide variety of biological activities. Exhibits antibacterial activity. This is Eosinophil cationic protein (RNASE3) from Pongo pygmaeus (Bornean orangutan).